The sequence spans 187 residues: Apolipophorin-3 (187 aa).

Residues 1-17 (MAAKFIILLALFALSQA) form the signal peptide. A propeptide spanning residues 18 to 22 (SVVRR) is cleaved from the precursor.

The protein belongs to the insect apolipophorin-3 family. In terms of assembly, equilibrium between a soluble monomer and a bound lipoprotein form. Apolipophorin-3 associates with lipophorin during lipid loading until each particle contains 9 or 14 molecules of apolipophorin-3. As to expression, hemolymph.

It localises to the secreted. In terms of biological role, assists in the loading of diacylglycerol, generated from triacylglycerol stores in the fat body through the action of adipokinetic hormone, into lipophorin, the hemolymph lipoprotein. It increases the lipid carrying capacity of lipophorin by covering the expanding hydrophobic surface resulting from diacylglycerol uptake. It thus plays a critical role in the transport of lipids during flight in several species of insects. The protein is Apolipophorin-3 of Hyphantria cunea (Fall webworm moth).